Consider the following 30-residue polypeptide: Hainantoxin F7-28.42 (30 aa).

Expressed by the venom gland.

It localises to the secreted. This chain is Hainantoxin F7-28.42, found in Cyriopagopus hainanus (Chinese bird spider).